We begin with the raw amino-acid sequence, 91 residues long: Small ribosomal subunit protein uS19 (91 aa).

It belongs to the universal ribosomal protein uS19 family.

Its function is as follows. Protein S19 forms a complex with S13 that binds strongly to the 16S ribosomal RNA. The chain is Small ribosomal subunit protein uS19 from Laribacter hongkongensis (strain HLHK9).